The primary structure comprises 250 residues: Small ribosomal subunit protein uS2 (250 aa).

It belongs to the universal ribosomal protein uS2 family.

In Acidovorax ebreus (strain TPSY) (Diaphorobacter sp. (strain TPSY)), this protein is Small ribosomal subunit protein uS2.